A 279-amino-acid polypeptide reads, in one-letter code: Urease accessory protein UreD (279 aa).

The protein belongs to the UreD family. As to quaternary structure, ureD, UreF and UreG form a complex that acts as a GTP-hydrolysis-dependent molecular chaperone, activating the urease apoprotein by helping to assemble the nickel containing metallocenter of UreC. The UreE protein probably delivers the nickel.

It is found in the cytoplasm. Functionally, required for maturation of urease via the functional incorporation of the urease nickel metallocenter. This Nostoc punctiforme (strain ATCC 29133 / PCC 73102) protein is Urease accessory protein UreD.